The chain runs to 233 residues: Pyridoxal phosphate homeostasis protein (233 aa).

K35 carries the post-translational modification N6-(pyridoxal phosphate)lysine.

The protein belongs to the pyridoxal phosphate-binding protein YggS/PROSC family.

Pyridoxal 5'-phosphate (PLP)-binding protein, which is involved in PLP homeostasis. In Pasteurella multocida (strain Pm70), this protein is Pyridoxal phosphate homeostasis protein.